Here is a 256-residue protein sequence, read N- to C-terminus: 1-(5-phosphoribosyl)-5-[(5-phosphoribosylamino)methylideneamino] imidazole-4-carboxamide isomerase (256 aa).

The active-site Proton acceptor is the D8. D130 (proton donor) is an active-site residue.

The protein belongs to the HisA/HisF family.

The protein resides in the cytoplasm. The catalysed reaction is 1-(5-phospho-beta-D-ribosyl)-5-[(5-phospho-beta-D-ribosylamino)methylideneamino]imidazole-4-carboxamide = 5-[(5-phospho-1-deoxy-D-ribulos-1-ylimino)methylamino]-1-(5-phospho-beta-D-ribosyl)imidazole-4-carboxamide. It functions in the pathway amino-acid biosynthesis; L-histidine biosynthesis; L-histidine from 5-phospho-alpha-D-ribose 1-diphosphate: step 4/9. The protein is 1-(5-phosphoribosyl)-5-[(5-phosphoribosylamino)methylideneamino] imidazole-4-carboxamide isomerase of Pelodictyon phaeoclathratiforme (strain DSM 5477 / BU-1).